Consider the following 156-residue polypeptide: Succinate dehydrogenase assembly factor 2-B, mitochondrial (156 aa).

A mitochondrion-targeting transit peptide spans 1–24 (MLRQFIISRVGRRLQLPMITQSRL).

Belongs to the SDHAF2 family. Interacts with the flavoprotein subunit within the SDH catalytic dimer.

The protein localises to the mitochondrion matrix. Plays an essential role in the assembly of succinate dehydrogenase (SDH), an enzyme complex (also referred to as respiratory complex II) that is a component of both the tricarboxylic acid (TCA) cycle and the mitochondrial electron transport chain, and which couples the oxidation of succinate to fumarate with the reduction of ubiquinone (coenzyme Q) to ubiquinol. Required for flavinylation (covalent attachment of FAD) of the flavoprotein subunit of the SDH catalytic dimer. The chain is Succinate dehydrogenase assembly factor 2-B, mitochondrial from Drosophila sechellia (Fruit fly).